A 270-amino-acid chain; its full sequence is 23S rRNA (adenosine(1067)-2'-O)-methyltransferase (270 aa).

Arginine 135, arginine 165, glycine 218, isoleucine 238, and leucine 247 together coordinate S-adenosyl-L-methionine.

This sequence belongs to the class IV-like SAM-binding methyltransferase superfamily. RNA methyltransferase TsnR/AvirB family.

The enzyme catalyses adenosine(1067) in 23S rRNA + S-adenosyl-L-methionine = 2'-O-methyladenosine(1067) in 23S rRNA + S-adenosyl-L-homocysteine + H(+). In terms of biological role, specifically methylates the adenosine-1067 in 23S ribosomal RNA. Confers resistance to antibiotic thiostrepton. The chain is 23S rRNA (adenosine(1067)-2'-O)-methyltransferase from Streptomyces laurentii.